We begin with the raw amino-acid sequence, 167 residues long: Calcium-binding protein CML19 (167 aa).

EF-hand domains are found at residues 23-58 (QKRREIREIFDLFDIDGSGSIDASELNVAMRSLGFE), 59-94 (MNNQQINELMAEVDKNQSGAIDFDEFVHMMTTKFGE), 96-131 (DSIDELSKAFKIIDHDNNGKISPRDIKMIAKELGEN), and 132-167 (FTDNDIEEMIEEADRDKDGEVNLEEFMKMMKRTSYG). Ca(2+)-binding residues include Asp36, Asp38, Ser40, Ser42, Glu47, Asp72, Asn74, Ser76, Glu83, Asp109, Asp111, Asn113, Lys115, Asp120, Asp145, Asp147, Asp149, Glu151, and Glu156.

It belongs to the centrin family. Interacts with RAD4. Calcium is required for this interaction. Interacts with SAC3B. Expressed in leaves, roots, and at lower level in stems. Barely detectable in flower buds and flowers.

Its subcellular location is the cytoplasm. It is found in the nucleus. Functionally, potential calcium sensor that binds calcium in vitro. Modulates homologous recombination and nucleotide excision repair (NER). Involved in the early response to UV irradiation. This Arabidopsis thaliana (Mouse-ear cress) protein is Calcium-binding protein CML19.